The primary structure comprises 307 residues: 2-haloacid dehalogenase, configuration-inverting (307 aa).

Belongs to the HAD-like hydrolase superfamily. S-2-haloalkanoic acid dehalogenase family. Homodimer.

The enzyme catalyses an (S)-2-haloacid + H2O = a (2R)-2-hydroxycarboxylate + a halide anion + H(+). It carries out the reaction an (R)-2-haloacid + H2O = a (2S)-2-hydroxycarboxylate + a halide anion + H(+). Dehalogenates both (S)- and (R)-2-haloalkanoic acids to the corresponding (R)- and (S)-hydroxyalkanoic acids, respectively, with inversion of configuration at C-2. Acts on 2-haloalkanoic acids whose carbon chain lengths are five or less. In Pseudomonas sp. (strain 113), this protein is 2-haloacid dehalogenase, configuration-inverting.